The primary structure comprises 417 residues: Serine hydroxymethyltransferase (417 aa).

Residues L121 and 125–127 (GHL) contribute to the (6S)-5,6,7,8-tetrahydrofolate site. K229 carries the N6-(pyridoxal phosphate)lysine modification. Position 355–357 (355–357 (SPF)) interacts with (6S)-5,6,7,8-tetrahydrofolate.

This sequence belongs to the SHMT family. As to quaternary structure, homodimer. Requires pyridoxal 5'-phosphate as cofactor.

The protein resides in the cytoplasm. It catalyses the reaction (6R)-5,10-methylene-5,6,7,8-tetrahydrofolate + glycine + H2O = (6S)-5,6,7,8-tetrahydrofolate + L-serine. It functions in the pathway one-carbon metabolism; tetrahydrofolate interconversion. Its pathway is amino-acid biosynthesis; glycine biosynthesis; glycine from L-serine: step 1/1. Catalyzes the reversible interconversion of serine and glycine with tetrahydrofolate (THF) serving as the one-carbon carrier. This reaction serves as the major source of one-carbon groups required for the biosynthesis of purines, thymidylate, methionine, and other important biomolecules. Also exhibits THF-independent aldolase activity toward beta-hydroxyamino acids, producing glycine and aldehydes, via a retro-aldol mechanism. The chain is Serine hydroxymethyltransferase from Enterobacter sp. (strain 638).